The following is a 482-amino-acid chain: Thymidine phosphorylase (482 aa).

The propeptide occupies 1 to 10 (MAALMTPGTG). Residues 1–36 (MAALMTPGTGAPPAPGDFSGEGSQGLPDPSPEPKQL) form a disordered region. At threonine 6 the chain carries Phosphothreonine. Residues histidine 116, arginine 202, serine 217, and lysine 221 each contribute to the substrate site. R-V-A-A-A-L-X(5,6)-L-G-R repeat units lie at residues 265–279 (RVAA…PLGR) and 329–342 (RVAA…ALGR). R-A-L-X-X-A-L-V-L repeat units follow at residues 393–401 (RALPLALVL) and 453–461 (RALQEALVL).

It belongs to the thymidine/pyrimidine-nucleoside phosphorylase family. As to quaternary structure, homodimer.

The enzyme catalyses thymidine + phosphate = 2-deoxy-alpha-D-ribose 1-phosphate + thymine. It functions in the pathway pyrimidine metabolism; dTMP biosynthesis via salvage pathway; dTMP from thymine: step 1/2. In terms of biological role, may have a role in maintaining the integrity of the blood vessels. Has growth promoting activity on endothelial cells, angiogenic activity in vivo and chemotactic activity on endothelial cells in vitro. Its function is as follows. Catalyzes the reversible phosphorolysis of thymidine. The produced molecules are then utilized as carbon and energy sources or in the rescue of pyrimidine bases for nucleotide synthesis. The sequence is that of Thymidine phosphorylase from Homo sapiens (Human).